Reading from the N-terminus, the 216-residue chain is Cytosolic-abundant heat soluble protein 2 (216 aa).

The segment covering 1 to 11 (MSRDQGSTEYD) has biased composition (polar residues). 2 disordered regions span residues 1–34 (MSRDQGSTEYDANQRQEQHQEQHNTSYTHTDVRT) and 66–91 (RISGQSSETHVQMTPEMEAEARKDRE). The span at 12–22 (ANQRQEQHQEQ) shows a compositional bias: basic and acidic residues. 2 stretches are compositionally biased toward polar residues: residues 25-34 (TSYTHTDVRT) and 68-77 (SGQSSETHVQ). Residues 81 to 180 (EMEAEARKDR…ARLATQALDQ (100 aa)) are a coiled coil. 2 CAHS motif regions span residues 115–133 (YRKQAEQEAERLRKELEKQ) and 152–170 (QKRQVELEAQLAKRELDRE).

This sequence belongs to the Cytosolic-abundant heat soluble protein (CAHS) family.

It localises to the cytoplasm. In terms of biological role, CAHS proteins are cytosolic heat soluble proteins that seem to contribute to the anhydrobiosis in tardigrades, but their specific mechanisms are yet to be identified. It is possible that protection during anhydrobiosis might occur via the stabilization of vitrifying small molecules such as sugars, but not via the direct glass transition of CAHS proteins themselves. The chain is Cytosolic-abundant heat soluble protein 2 from Ramazzottius varieornatus (Water bear).